Here is a 162-residue protein sequence, read N- to C-terminus: Transcription elongation factor GreA (162 aa).

Residues 45–74 (ENAEYEAAREKQAFIEGRIKELEDMTARAE) are a coiled coil.

This sequence belongs to the GreA/GreB family.

Its function is as follows. Necessary for efficient RNA polymerase transcription elongation past template-encoded arresting sites. The arresting sites in DNA have the property of trapping a certain fraction of elongating RNA polymerases that pass through, resulting in locked ternary complexes. Cleavage of the nascent transcript by cleavage factors such as GreA or GreB allows the resumption of elongation from the new 3'terminus. GreA releases sequences of 2 to 3 nucleotides. This chain is Transcription elongation factor GreA, found in Rickettsia conorii (strain ATCC VR-613 / Malish 7).